The primary structure comprises 373 residues: Dual-specificity RNA methyltransferase RlmN (373 aa).

E94 functions as the Proton acceptor in the catalytic mechanism. Residues 100 to 339 (EDDRATLCVS…VTIRKTRGDD (240 aa)) form the Radical SAM core domain. A disulfide bridge links C107 with C344. [4Fe-4S] cluster-binding residues include C114, C118, and C121. Residues 168 to 169 (GE), S200, 222 to 224 (SLH), and N301 each bind S-adenosyl-L-methionine. Residue C344 is the S-methylcysteine intermediate of the active site.

Belongs to the radical SAM superfamily. RlmN family. The cofactor is [4Fe-4S] cluster.

Its subcellular location is the cytoplasm. The catalysed reaction is adenosine(2503) in 23S rRNA + 2 reduced [2Fe-2S]-[ferredoxin] + 2 S-adenosyl-L-methionine = 2-methyladenosine(2503) in 23S rRNA + 5'-deoxyadenosine + L-methionine + 2 oxidized [2Fe-2S]-[ferredoxin] + S-adenosyl-L-homocysteine. It catalyses the reaction adenosine(37) in tRNA + 2 reduced [2Fe-2S]-[ferredoxin] + 2 S-adenosyl-L-methionine = 2-methyladenosine(37) in tRNA + 5'-deoxyadenosine + L-methionine + 2 oxidized [2Fe-2S]-[ferredoxin] + S-adenosyl-L-homocysteine. Functionally, specifically methylates position 2 of adenine 2503 in 23S rRNA and position 2 of adenine 37 in tRNAs. m2A2503 modification seems to play a crucial role in the proofreading step occurring at the peptidyl transferase center and thus would serve to optimize ribosomal fidelity. The polypeptide is Dual-specificity RNA methyltransferase RlmN (Vibrio cholerae serotype O1 (strain M66-2)).